The chain runs to 92 residues: YcgL domain-containing protein Sama_1929 (92 aa).

In terms of domain architecture, YcgL spans 1-85 (MICAVYKSSR…PKDNLLTQHR (85 aa)).

In Shewanella amazonensis (strain ATCC BAA-1098 / SB2B), this protein is YcgL domain-containing protein Sama_1929.